Here is a 196-residue protein sequence, read N- to C-terminus: tRNA(Phe) 7-((3-amino-3-carboxypropyl)-4-demethylwyosine(37)-N(4))-methyltransferase (196 aa).

It belongs to the TYW3 family.

The catalysed reaction is 4-demethyl-7-[(3S)-3-amino-3-carboxypropyl]wyosine(37) in tRNA(Phe) + S-adenosyl-L-methionine = 7-[(3S)-3-amino-3-carboxypropyl]wyosine(37) in tRNA(Phe) + S-adenosyl-L-homocysteine + H(+). Its function is as follows. S-adenosyl-L-methionine-dependent methyltransferase that acts as a component of the wyosine derivatives biosynthesis pathway. Probably methylates N-4 position of wybutosine-86 to produce wybutosine-72. In Archaeoglobus fulgidus (strain ATCC 49558 / DSM 4304 / JCM 9628 / NBRC 100126 / VC-16), this protein is tRNA(Phe) 7-((3-amino-3-carboxypropyl)-4-demethylwyosine(37)-N(4))-methyltransferase.